Here is a 169-residue protein sequence, read N- to C-terminus: Endoribonuclease YbeY (169 aa).

Zn(2+)-binding residues include histidine 117, histidine 121, and histidine 127.

Belongs to the endoribonuclease YbeY family. Zn(2+) is required as a cofactor.

It is found in the cytoplasm. In terms of biological role, single strand-specific metallo-endoribonuclease involved in late-stage 70S ribosome quality control and in maturation of the 3' terminus of the 16S rRNA. The polypeptide is Endoribonuclease YbeY (Mesoplasma florum (strain ATCC 33453 / NBRC 100688 / NCTC 11704 / L1) (Acholeplasma florum)).